We begin with the raw amino-acid sequence, 445 residues long: Phosphoglucosamine mutase (445 aa).

Catalysis depends on serine 102, which acts as the Phosphoserine intermediate. Serine 102, aspartate 241, aspartate 243, and aspartate 245 together coordinate Mg(2+). Residue serine 102 is modified to Phosphoserine.

Belongs to the phosphohexose mutase family. The cofactor is Mg(2+). Activated by phosphorylation.

The enzyme catalyses alpha-D-glucosamine 1-phosphate = D-glucosamine 6-phosphate. In terms of biological role, catalyzes the conversion of glucosamine-6-phosphate to glucosamine-1-phosphate. The protein is Phosphoglucosamine mutase of Escherichia coli O139:H28 (strain E24377A / ETEC).